Here is a 923-residue protein sequence, read N- to C-terminus: Neuropilin-1a (923 aa).

Positions 1–19 (MHCGLVLILFTGIFLIVSA) are cleaved as a signal peptide. The Extracellular segment spans residues 20 to 856 (LKNDKCGDNI…AGNMLKTLDP (837 aa)). Intrachain disulfides connect Cys-25–Cys-52, Cys-80–Cys-102, and Cys-145–Cys-171. 2 consecutive CUB domains span residues 25 to 139 (CGDN…YEIF) and 145 to 263 (CSRN…FTVL). An N-linked (GlcNAc...) asparagine glycan is attached at Asn-148. Ca(2+)-binding residues include Glu-193, Asp-207, and Asp-248. The cysteines at positions 204 and 226 are disulfide-linked. Asn-259 carries an N-linked (GlcNAc...) asparagine glycan. Disulfide bonds link Cys-273-Cys-422 and Cys-429-Cys-581. F5/8 type C domains follow at residues 273 to 422 (CTEP…VYGC) and 429 to 581 (CSGM…LLGC). N-linked (GlcNAc...) asparagine glycosylation occurs at Asn-520. Residues 587-624 (TVPPTTPAASTTPSDECDDDQANCHSGTGDGYDQTGGT) form a disordered region. A glycan (O-linked (Xyl...) (chondroitin sulfate) serine; alternate) is linked at Ser-612. O-linked (Xyl...) (heparan sulfate) serine; alternate glycosylation is present at Ser-612. Residues 642-811 (FACDFGWAND…DNVNMADCKD (170 aa)) enclose the MAM domain. The chain crosses the membrane as a helical span at residues 857–877 (ILITIIAMSALGVFLGAICGV). The Cytoplasmic segment spans residues 878 to 923 (VLYCACSHSGMSDRNLSALENYNFELVDGVKLKKDKLNSQNSYSEA).

Belongs to the neuropilin family.

It is found in the membrane. In terms of biological role, receptor involved in the development of the cardiovascular system, in angiogenesis, in the formation of certain neuronal circuits and in organogenesis outside the nervous system. It mediates the chemorepulsant activity of semaphorins. Regulates angiogenesis through a VEGF-dependent pathway. The sequence is that of Neuropilin-1a (nrp1a) from Danio rerio (Zebrafish).